The following is a 294-amino-acid chain: MTTNKYIATPSRTKDILGKYHFTFKKSLGQNFLVDVSVLQNIIRHAGITKDTAAIEIGPGIGALTEQLAIHADQVVAFEIDQRLLPILQDTLGEYSNVSVIHQDILKADVTKVIDEHFKEGQEVHVVANLPYYITTPILMKLIRDRLPVTSLTVMIQKEVADRMSGEPNSKSYGSLSLAVQYYSEAKVVMNVPKQVFMPQPNVDSSILQLTMRKQPPVEVTDEDFFFEIIQASFAQRRKTLKNNLTRFFKGVHDKEKIDHILQEAGVEGIRRGESLTMEEFAQVANTFYQYQSK.

The S-adenosyl-L-methionine site is built by Asn31, Leu33, Gly58, Glu79, Asp104, and Asn129.

It belongs to the class I-like SAM-binding methyltransferase superfamily. rRNA adenine N(6)-methyltransferase family. RsmA subfamily.

It localises to the cytoplasm. The enzyme catalyses adenosine(1518)/adenosine(1519) in 16S rRNA + 4 S-adenosyl-L-methionine = N(6)-dimethyladenosine(1518)/N(6)-dimethyladenosine(1519) in 16S rRNA + 4 S-adenosyl-L-homocysteine + 4 H(+). Functionally, specifically dimethylates two adjacent adenosines (A1518 and A1519) in the loop of a conserved hairpin near the 3'-end of 16S rRNA in the 30S particle. May play a critical role in biogenesis of 30S subunits. This Oceanobacillus iheyensis (strain DSM 14371 / CIP 107618 / JCM 11309 / KCTC 3954 / HTE831) protein is Ribosomal RNA small subunit methyltransferase A.